The chain runs to 202 residues: LexA repressor (202 aa).

The segment at residues 28-48 is a DNA-binding region (H-T-H motif); sequence RAEIAQRLGFRSPNAAEEHLK. Active-site for autocatalytic cleavage activity residues include serine 119 and lysine 156.

This sequence belongs to the peptidase S24 family. In terms of assembly, homodimer.

The enzyme catalyses Hydrolysis of Ala-|-Gly bond in repressor LexA.. Its function is as follows. Represses a number of genes involved in the response to DNA damage (SOS response), including recA and lexA. Binds to the 16 bp palindromic sequence 5'-CTGTATATATATACAG-3'. In the presence of single-stranded DNA, RecA interacts with LexA causing an autocatalytic cleavage which disrupts the DNA-binding part of LexA, leading to derepression of the SOS regulon and eventually DNA repair. The chain is LexA repressor from Escherichia coli (strain K12 / MC4100 / BW2952).